The sequence spans 885 residues: Cytosolic carboxypeptidase-like protein 5 (885 aa).

The 414-residue stretch at 157–570 (YPFSYSDCQD…AMAIAALDMA (414 aa)) folds into the Peptidase M14 domain. Zn(2+) contacts are provided by H252 and E255. The interval 343–402 (NSQSPSEHQHSSHLPPDAPLSDPEKADSLQNRAHLGRSSSGDKPEAWTQTEVAEQKPNSV) is disordered. The segment covering 388–402 (AWTQTEVAEQKPNSV) has biased composition (polar residues). H434 serves as a coordination point for Zn(2+). E516 (proton donor/acceptor) is an active-site residue. Disordered stretches follow at residues 605–733 (TTVN…LASS) and 783–839 (RLQA…PRPC). A compositionally biased stretch (polar residues) spans 620–640 (PPRSNNGLPVSCSENTLSRAR). Composition is skewed to low complexity over residues 641 to 666 (SFST…NSPS) and 714 to 733 (PTSS…LASS). Residue S840 is modified to Phosphoserine.

The protein belongs to the peptidase M14 family. Zn(2+) is required as a cofactor.

Its subcellular location is the cytoplasm. It is found in the cytosol. It localises to the nucleus. The protein resides in the cytoskeleton. The protein localises to the spindle. Its subcellular location is the midbody. The enzyme catalyses gamma-L-glutamyl-L-glutamyl-[protein] + H2O = L-glutamyl-[protein] + L-glutamate. The catalysed reaction is (L-glutamyl)(n+1)-gamma-L-glutamyl-L-glutamyl-[protein] + H2O = (L-glutamyl)(n)-gamma-L-glutamyl-L-glutamyl-[protein] + L-glutamate. It catalyses the reaction C-terminal L-alpha-aminoacyl-L-glutamyl-[tubulin] + H2O = C-terminal L-alpha-aminoacyl-[tubulin] + L-glutamate. It carries out the reaction C-terminal L-alpha-aminoacyl-L-glutamyl-L-glutamyl-[tubulin] + H2O = C-terminal L-alpha-aminoacyl-L-glutamyl-[tubulin] + L-glutamate. Metallocarboxypeptidase that mediates deglutamylation of tubulin and non-tubulin target proteins. Catalyzes the removal of polyglutamate side chains present on the gamma-carboxyl group of glutamate residues within the C-terminal tail of alpha- and beta-tubulin. Cleaves alpha- and gamma-linked polyglutamate tubulin side-chain, as well as the branching point glutamate. Also catalyzes the removal of alpha-linked glutamate residues from the carboxy-terminus of alpha-tubulin. Mediates deglutamylation of nucleotidyltransferase CGAS, leading to CGAS antiviral defense response activation. The protein is Cytosolic carboxypeptidase-like protein 5 (AGBL5) of Bos taurus (Bovine).